The sequence spans 223 residues: Protein-disulfide oxidoreductase DsbI (223 aa).

A helical membrane pass occupies residues 26 to 46 (LLWLLMAVAMGALIILAHSFF). C55 and C58 form a disulfide bridge. The next 2 membrane-spanning stretches (helical) occupy residues 59 to 78 (VYIRYAMFVMVIGGLVAAIN) and 82 to 102 (IILKLIGCVMAFYGSILGLKF). An intrachain disulfide couples C127 to C153. A helical transmembrane segment spans residues 198-218 (CMLAFGMCLVLLVIMSGAWAL).

The protein belongs to the DsbB family. DsbI subfamily. Interacts with DsbL.

The protein localises to the cell inner membrane. Functionally, required for disulfide bond formation in some proteins. Part of a redox system composed of DsbI and DsbL that mediates formation of an essential disulfide bond in AssT. The chain is Protein-disulfide oxidoreductase DsbI from Escherichia coli O1:K1 / APEC.